The chain runs to 506 residues: MGIRPEEISSVLAEKIKNFDFSVETQEIGYVIQSGDGIARIYGLDNAVYGEMVEFESGVVGMVLNLEEDTVGVVVLGDPEKVKEGDVVKRTGRIMEVPVGKGLLGRVVNPLGEPIDGKGPIEYEGKRPIESPAPPIVRRQPVNTPLQTGILAIDSMIPIGRGQRELIIGDRQTGKTAIAVDTIINQKDKGVYCIYVAIGQKASTVASVVNTLEKYGAMEYTTVVAATASESAALQYIAPYAGCAMGEHFMYQGKDVLVVYDDLSKHAVAYRTLSLLLRRPPGREAYPGDVFYLHSRLLERSARLSDEYGGGSLTALPIVETQAGDISAYIPTNVISITDGQIYLESELFYSGIRPAINVGLSVSRVGGAAQIKAMKKVAGRLRLELSQYRELQVFARFGTDLDKATLEVLRQGERIVEITKQPQYQPMAVEDQVIAIYTVMNRYVTDIEVSEVRPFVMGLLKFLDEAYPEIKQSIRDTKDLTKETEEKLKAAILEYKEKYAAKGEK.

The span at 119 to 129 (GPIEYEGKRPI) shows a compositional bias: basic and acidic residues. The disordered stretch occupies residues 119–138 (GPIEYEGKRPIESPAPPIVR). 169–176 (GDRQTGKT) provides a ligand contact to ATP.

It belongs to the ATPase alpha/beta chains family. F-type ATPases have 2 components, CF(1) - the catalytic core - and CF(0) - the membrane proton channel. CF(1) has five subunits: alpha(3), beta(3), gamma(1), delta(1), epsilon(1). CF(0) has three main subunits: a(1), b(2) and c(9-12). The alpha and beta chains form an alternating ring which encloses part of the gamma chain. CF(1) is attached to CF(0) by a central stalk formed by the gamma and epsilon chains, while a peripheral stalk is formed by the delta and b chains.

It localises to the cell membrane. It carries out the reaction ATP + H2O + 4 H(+)(in) = ADP + phosphate + 5 H(+)(out). Produces ATP from ADP in the presence of a proton gradient across the membrane. The alpha chain is a regulatory subunit. This chain is ATP synthase subunit alpha, found in Caldanaerobacter subterraneus subsp. tengcongensis (strain DSM 15242 / JCM 11007 / NBRC 100824 / MB4) (Thermoanaerobacter tengcongensis).